The sequence spans 188 residues: Protein SSX1 (188 aa).

Disordered stretches follow at residues 1-22 (MNGD…EKRS) and 111-188 (IMPK…EDDE). In terms of domain architecture, KRAB-related spans 20-83 (KRSKAFDDIA…KQATDFQGND (64 aa)). Over residues 115-125 (KPAEDENDSKG) the composition is skewed to basic and acidic residues. At Ser-123 the chain carries Phosphoserine. Residues 153–170 (KRSGPKRGKHAWTHRLRE) show a composition bias toward basic residues. A compositionally biased stretch (acidic residues) spans 179–188 (EISDPEEDDE).

It belongs to the SSX family. In terms of tissue distribution, expressed at high level in the testis. Expressed at low level in thyroid. Not detected in tonsil, colon, lung, spleen, prostate, kidney, striated and smooth muscles. Detected in rhabdomyosarcoma and fibrosarcoma cell lines. Not detected in mesenchymal and epithelial cell lines. Expressed in testis.

It is found in the cytoplasm. The protein localises to the cytoskeleton. The protein resides in the flagellum axoneme. In terms of biological role, could act as a modulator of transcription. Plays a role in spermatogenesis. The chain is Protein SSX1 (SSX1) from Homo sapiens (Human).